A 329-amino-acid polypeptide reads, in one-letter code: 4-hydroxythreonine-4-phosphate dehydrogenase (329 aa).

His-136 and Thr-137 together coordinate substrate. A divalent metal cation is bound by residues His-166, His-211, and His-266. Residues Lys-274, Asn-283, and Arg-292 each coordinate substrate.

This sequence belongs to the PdxA family. Homodimer. Requires Zn(2+) as cofactor. Mg(2+) is required as a cofactor. It depends on Co(2+) as a cofactor.

It localises to the cytoplasm. It catalyses the reaction 4-(phosphooxy)-L-threonine + NAD(+) = 3-amino-2-oxopropyl phosphate + CO2 + NADH. The protein operates within cofactor biosynthesis; pyridoxine 5'-phosphate biosynthesis; pyridoxine 5'-phosphate from D-erythrose 4-phosphate: step 4/5. Catalyzes the NAD(P)-dependent oxidation of 4-(phosphooxy)-L-threonine (HTP) into 2-amino-3-oxo-4-(phosphooxy)butyric acid which spontaneously decarboxylates to form 3-amino-2-oxopropyl phosphate (AHAP). The sequence is that of 4-hydroxythreonine-4-phosphate dehydrogenase from Salmonella arizonae (strain ATCC BAA-731 / CDC346-86 / RSK2980).